We begin with the raw amino-acid sequence, 495 residues long: Fusicoccadiene 8-ol C-16 hydroxylase (495 aa).

Residues 12–32 (VLLALIVWIGTTIIYNIYFHP) traverse the membrane as a helical segment. Asparagine 249 and asparagine 317 each carry an N-linked (GlcNAc...) asparagine glycan. Position 439 (cysteine 439) interacts with heme.

It belongs to the cytochrome P450 family. Requires heme as cofactor.

It localises to the membrane. It functions in the pathway mycotoxin biosynthesis. Cytochrome P450 monooxygenase; part of the gene cluster that mediates the biosynthesis of the diterpene glucoside brassicicene C. In the first step of the brassicicene C biosynthesis, the bifunctional diterpene synthase bsc8 that possesses both prenyl transferase and terpene cyclase activity, converts isopentenyl diphosphate and dimethylallyl diphosphate into geranylgeranyl diphosphate (GGDP) that is further converted into fusicocca-2,10(14)-diene, the first precursor for brassicicene C. Fusicocca-2,10(14)-diene is then substrate of cytochrome P450 monooxygenase bsc1 for hydroxylation at the C-8 position. Oxidation at C-16 position to aldehyde is then catalyzed by the cytochrome P450 monooyxygenase bsc7, yielding fusicocca-2,10(14)-diene-8-beta,16-diol. Follows the isomerization of the double bond and reduction of aldehyde to alcohol catalyzed by the short-chain dehydrogenase/reductase bsc3 to yield the diol compound fusicocca-1,10(14)-diene-8 beta,16-diol. The next step is the oxidation at the C-3 position of fusicocca-2,10(14)-diene-8-beta,16-diol catalyzed by the alpha-ketoglutarate dependent dioxygenase bsc9, to produce a triol compound. Methylation of the hydroxy group at position 16 is performed by the methyltransferase bsc6. 16-O-methylation is followed by oxidation at the C-13 position to ketone and an alkyl shift of the methyl group leads to brassicicene C. Although the probable acetyltransferase bsc4 is included in the gene cluster, no acetylation reactions are necessary for brassicicene C biosynthesis. However, the fact that brassicicene E, which is a structurally related compound having an acetoxy group at position 12, was previously isolated from another strain of A.brassicicola suggests that the ATCC 96836 strain might also produce a small amount of brassicicene E. The protein is Fusicoccadiene 8-ol C-16 hydroxylase of Alternaria brassicicola (Dark leaf spot agent).